The sequence spans 217 residues: MLVLKLTGRIFDEEDLVAKYAAIIRRIGGKVAVVTGGGEVARRYIAMARKGGASNTFQDLLGIYASRLNALLLISLIGDDAYPKAPSTVEEFLDAWRRHRVVVAGGFQPGQSTATVAALVAEAAGASVLLNAANIDAVYDDDPRRNPNARKIPTLTYDELERILKTSVVPGGYELVDPWSISILRRNCVTTYIFDGRRPEYVEEILRGGNPGSKITC.

5–9 (KLTGR) contributes to the ATP binding site. Gly37 lines the UMP pocket. Residues Gly38 and Arg42 each contribute to the ATP site. UMP is bound by residues Asp59 and 107–113 (FQPGQST). ATP contacts are provided by Asn134, Tyr139, and Asp142.

Belongs to the UMP kinase family. Homohexamer.

Its subcellular location is the cytoplasm. The catalysed reaction is UMP + ATP = UDP + ADP. The protein operates within pyrimidine metabolism; CTP biosynthesis via de novo pathway; UDP from UMP (UMPK route): step 1/1. With respect to regulation, inhibited by UTP. Catalyzes the reversible phosphorylation of UMP to UDP. The chain is Uridylate kinase from Pyrobaculum calidifontis (strain DSM 21063 / JCM 11548 / VA1).